A 203-amino-acid polypeptide reads, in one-letter code: Peptidyl-tRNA hydrolase (203 aa).

Y26 serves as a coordination point for tRNA. H31 functions as the Proton acceptor in the catalytic mechanism. Y82, N84, and N130 together coordinate tRNA.

It belongs to the PTH family. Monomer.

It localises to the cytoplasm. It catalyses the reaction an N-acyl-L-alpha-aminoacyl-tRNA + H2O = an N-acyl-L-amino acid + a tRNA + H(+). In terms of biological role, hydrolyzes ribosome-free peptidyl-tRNAs (with 1 or more amino acids incorporated), which drop off the ribosome during protein synthesis, or as a result of ribosome stalling. Functionally, catalyzes the release of premature peptidyl moieties from peptidyl-tRNA molecules trapped in stalled 50S ribosomal subunits, and thus maintains levels of free tRNAs and 50S ribosomes. This Streptomyces avermitilis (strain ATCC 31267 / DSM 46492 / JCM 5070 / NBRC 14893 / NCIMB 12804 / NRRL 8165 / MA-4680) protein is Peptidyl-tRNA hydrolase.